Consider the following 333-residue polypeptide: Adenosine deaminase (333 aa).

The Zn(2+) site is built by H12 and H14. Substrate-binding residues include H14, D16, and G170. H197 contacts Zn(2+). E200 (proton donor) is an active-site residue. D278 serves as a coordination point for Zn(2+). Residue D279 coordinates substrate.

It belongs to the metallo-dependent hydrolases superfamily. Adenosine and AMP deaminases family. Adenosine deaminase subfamily. Requires Zn(2+) as cofactor.

The catalysed reaction is adenosine + H2O + H(+) = inosine + NH4(+). It catalyses the reaction 2'-deoxyadenosine + H2O + H(+) = 2'-deoxyinosine + NH4(+). Its function is as follows. Catalyzes the hydrolytic deamination of adenosine and 2-deoxyadenosine. The sequence is that of Adenosine deaminase from Klebsiella pneumoniae subsp. pneumoniae (strain ATCC 700721 / MGH 78578).